Reading from the N-terminus, the 507-residue chain is Aldehyde dehydrogenase 1, mitochondrial (507 aa).

Residues 1-21 constitute a mitochondrion transit peptide; it reads MLATRNLVPIIRASIKWRIKL. 266-271 lines the NAD(+) pocket; it reads GSTLVG. Catalysis depends on residues Glu-289 and Cys-323.

This sequence belongs to the aldehyde dehydrogenase family. In terms of assembly, homotetramer.

The protein resides in the mitochondrion matrix. The catalysed reaction is an aldehyde + NAD(+) + H2O = a carboxylate + NADH + 2 H(+). It participates in alcohol metabolism; ethanol degradation; acetate from ethanol: step 2/2. The chain is Aldehyde dehydrogenase 1, mitochondrial (ALD1) from Saccharomyces cerevisiae (Baker's yeast).